Here is a 175-residue protein sequence, read N- to C-terminus: NADH-ubiquinone oxidoreductase chain 6 (175 aa).

The next 5 helical transmembrane spans lie at 1-21, 25-45, 47-67, 88-108, and 149-169; these read MMIY…VGFS, SPIY…GIVM, FGGS…MLVV, TVLS…LYMF, and YGVW…LVVL.

This sequence belongs to the complex I subunit 6 family. As to quaternary structure, core subunit of respiratory chain NADH dehydrogenase (Complex I) which is composed of 45 different subunits.

The protein localises to the mitochondrion inner membrane. It carries out the reaction a ubiquinone + NADH + 5 H(+)(in) = a ubiquinol + NAD(+) + 4 H(+)(out). Core subunit of the mitochondrial membrane respiratory chain NADH dehydrogenase (Complex I) which catalyzes electron transfer from NADH through the respiratory chain, using ubiquinone as an electron acceptor. Essential for the catalytic activity and assembly of complex I. The chain is NADH-ubiquinone oxidoreductase chain 6 (MT-ND6) from Rhinoceros unicornis (Greater Indian rhinoceros).